The primary structure comprises 493 residues: Vinyl phenol reductase (493 aa).

FAD contacts are provided by Ala19, Glu38, Ser46, Thr50, Gly52, Ala156, Asp224, Asn448, and Val467.

This sequence belongs to the FAD-dependent oxidoreductase 2 family. FRD/SDH subfamily. Requires FAD as cofactor.

It catalyses the reaction 4-vinylphenol + NADH + H(+) = 4-ethylphenol + NAD(+). The enzyme catalyses 3,4-dihydroxystyrene + NADH + H(+) = 4-ethylcatechol + NAD(+). The catalysed reaction is 2-methoxy-4-vinylphenol + NADH + H(+) = 4-ethyl-2-methoxyphenol + NAD(+). In terms of biological role, involved in the production of ethylphenols during the degradation of hydroxycinnamic acids. Catalyzes the reduction of vinylphenols (4-vinylphenol (4-hydroxystyrene), 4-vinylcatechol (3,4-dihydroxystyrene), and 4-vinylguaiacol (2-methoxy-4-vinylphenol)) to their corresponding ethylphenols (4-ethylphenol, 4-ethylcatechol, and 4-ethylguaiacol, respectively) in the presence of NADH. These compounds are considered the most important flavor components of fermented soy sauce, and, on the other hand, are considered off flavor and responsible for sensorial wine and cider alteration. The 4-ethylphenol produced by the gut bacteria L.plantarum strain WCFS1 can get subsequent sulfation to 4-ethylphenyl sulfate (4EPS) by host sulfotransferase (SULT1A1); 4EPS can enter the brain and seems to alter brain activity. Therefore, this enzyme likely plays a role in gut microbiota-host metabolic interactions. This is Vinyl phenol reductase from Lactiplantibacillus plantarum (strain ATCC BAA-793 / NCIMB 8826 / WCFS1) (Lactobacillus plantarum).